A 241-amino-acid polypeptide reads, in one-letter code: 1-(5-phosphoribosyl)-5-[(5-phosphoribosylamino)methylideneamino] imidazole-4-carboxamide isomerase (241 aa).

The active-site Proton acceptor is aspartate 11. Aspartate 130 (proton donor) is an active-site residue.

This sequence belongs to the HisA/HisF family.

The protein localises to the cytoplasm. The enzyme catalyses 1-(5-phospho-beta-D-ribosyl)-5-[(5-phospho-beta-D-ribosylamino)methylideneamino]imidazole-4-carboxamide = 5-[(5-phospho-1-deoxy-D-ribulos-1-ylimino)methylamino]-1-(5-phospho-beta-D-ribosyl)imidazole-4-carboxamide. It participates in amino-acid biosynthesis; L-histidine biosynthesis; L-histidine from 5-phospho-alpha-D-ribose 1-diphosphate: step 4/9. The sequence is that of 1-(5-phosphoribosyl)-5-[(5-phosphoribosylamino)methylideneamino] imidazole-4-carboxamide isomerase from Acidothermus cellulolyticus (strain ATCC 43068 / DSM 8971 / 11B).